A 471-amino-acid polypeptide reads, in one-letter code: 3-isopropylmalate dehydratase large subunit (471 aa).

[4Fe-4S] cluster is bound by residues cysteine 349, cysteine 410, and cysteine 413.

Belongs to the aconitase/IPM isomerase family. LeuC type 1 subfamily. In terms of assembly, heterodimer of LeuC and LeuD. Requires [4Fe-4S] cluster as cofactor.

The catalysed reaction is (2R,3S)-3-isopropylmalate = (2S)-2-isopropylmalate. It participates in amino-acid biosynthesis; L-leucine biosynthesis; L-leucine from 3-methyl-2-oxobutanoate: step 2/4. Functionally, catalyzes the isomerization between 2-isopropylmalate and 3-isopropylmalate, via the formation of 2-isopropylmaleate. The polypeptide is 3-isopropylmalate dehydratase large subunit (Chromobacterium violaceum (strain ATCC 12472 / DSM 30191 / JCM 1249 / CCUG 213 / NBRC 12614 / NCIMB 9131 / NCTC 9757 / MK)).